Consider the following 187-residue polypeptide: Flavin prenyltransferase LpdB (187 aa).

Residues 10-12 (GAS), Ser37, 88-91 (SMKT), and Arg123 contribute to the FMN site. Residues Tyr153 and Lys169 each coordinate dimethylallyl phosphate.

Belongs to the UbiX/PAD1 family.

It carries out the reaction dimethylallyl phosphate + FMNH2 = prenylated FMNH2 + phosphate. In terms of biological role, involved in tannin degradation. Flavin prenyltransferase that catalyzes the synthesis of the prenylated FMN cofactor (prenyl-FMN) for gallate decarboxylase LpdC. The prenyltransferase is metal-independent and links a dimethylallyl moiety from dimethylallyl monophosphate (DMAP) to the flavin N5 and C6 atoms of FMN. This is Flavin prenyltransferase LpdB from Lactiplantibacillus plantarum (strain ATCC BAA-793 / NCIMB 8826 / WCFS1) (Lactobacillus plantarum).